Reading from the N-terminus, the 200-residue chain is Riboflavin kinase (200 aa).

A disordered region spans residues 1 to 20 (MATARPSIVGPDSGPESPFP). Mg(2+) contacts are provided by T42 and N44. E110 functions as the Nucleophile in the catalytic mechanism.

This sequence belongs to the flavokinase family. The cofactor is Zn(2+). Requires Mg(2+) as cofactor.

It carries out the reaction riboflavin + ATP = FMN + ADP + H(+). It participates in cofactor biosynthesis; FMN biosynthesis; FMN from riboflavin (ATP route): step 1/1. Its function is as follows. Catalyzes the phosphorylation of riboflavin (vitamin B2) to form flavin mononucleotide (FMN) coenzyme. This is Riboflavin kinase (FMN1) from Pyricularia oryzae (strain 70-15 / ATCC MYA-4617 / FGSC 8958) (Rice blast fungus).